Reading from the N-terminus, the 329-residue chain is Small ribosomal subunit protein uS2 (329 aa).

The protein belongs to the universal ribosomal protein uS2 family.

The polypeptide is Small ribosomal subunit protein uS2 (Bradyrhizobium sp. (strain ORS 278)).